The sequence spans 178 residues: MNQEVIAKRYASALFQIALEQQQLDRIEEDVRAVRQALAENGEFLSLLSNPNLSLEKKKALVREVFAGVSAPVKNTLLLLLERHRFGLVPELADQFIALANDARGIAEAIAYSARPLTDEELQALSDVFAKKVGKATLHIENIVEPELIGGVKLRIGNRIYDGSVSGQLERIQRQLIG.

It belongs to the ATPase delta chain family. F-type ATPases have 2 components, F(1) - the catalytic core - and F(0) - the membrane proton channel. F(1) has five subunits: alpha(3), beta(3), gamma(1), delta(1), epsilon(1). F(0) has three main subunits: a(1), b(2) and c(10-14). The alpha and beta chains form an alternating ring which encloses part of the gamma chain. F(1) is attached to F(0) by a central stalk formed by the gamma and epsilon chains, while a peripheral stalk is formed by the delta and b chains.

Its subcellular location is the cell membrane. Functionally, f(1)F(0) ATP synthase produces ATP from ADP in the presence of a proton or sodium gradient. F-type ATPases consist of two structural domains, F(1) containing the extramembraneous catalytic core and F(0) containing the membrane proton channel, linked together by a central stalk and a peripheral stalk. During catalysis, ATP synthesis in the catalytic domain of F(1) is coupled via a rotary mechanism of the central stalk subunits to proton translocation. Its function is as follows. This protein is part of the stalk that links CF(0) to CF(1). It either transmits conformational changes from CF(0) to CF(1) or is implicated in proton conduction. The protein is ATP synthase subunit delta of Geobacillus stearothermophilus (Bacillus stearothermophilus).